The chain runs to 582 residues: Arginine--tRNA ligase (582 aa).

The 'HIGH' region signature appears at 127-137 (PNLAKEMHVGH).

It belongs to the class-I aminoacyl-tRNA synthetase family. As to quaternary structure, monomer.

The protein resides in the cytoplasm. It carries out the reaction tRNA(Arg) + L-arginine + ATP = L-arginyl-tRNA(Arg) + AMP + diphosphate. The protein is Arginine--tRNA ligase of Psychromonas ingrahamii (strain DSM 17664 / CCUG 51855 / 37).